The chain runs to 276 residues: Proteasome subunit beta type-8 (276 aa).

Positions 1 to 72 (MALLDLCGAP…RKVQIEMAHG (72 aa)) are cleaved as a propeptide — removed in mature form. The active-site Nucleophile is Thr73.

This sequence belongs to the peptidase T1B family. The 26S proteasome consists of a 20S proteasome core and two 19S regulatory subunits. The 20S proteasome core is composed of 28 subunits that are arranged in four stacked rings, resulting in a barrel-shaped structure. The two end rings are each formed by seven alpha subunits, and the two central rings are each formed by seven beta subunits. The catalytic chamber with the active sites is on the inside of the barrel. Component of the immunoproteasome, where it displaces the equivalent housekeeping subunit PSMB5. Component of the spermatoproteasome, a form of the proteasome specifically found in testis. Directly interacts with POMP. Interacts with TAP1. Autocleaved. The resulting N-terminal Thr residue of the mature subunit is responsible for the nucleophile proteolytic activity.

It is found in the cytoplasm. The protein resides in the nucleus. The catalysed reaction is Cleavage of peptide bonds with very broad specificity.. Functionally, the proteasome is a multicatalytic proteinase complex which is characterized by its ability to cleave peptides with Arg, Phe, Tyr, Leu, and Glu adjacent to the leaving group at neutral or slightly basic pH. The proteasome has an ATP-dependent proteolytic activity. This subunit is involved in antigen processing to generate class I binding peptides. May participate in the generation of spliced peptides resulting from the ligation of two separate proteasomal cleavage products that are not contiguous in the parental protein. Required for adipocyte differentiation. This chain is Proteasome subunit beta type-8 (Psmb8), found in Rattus norvegicus (Rat).